Here is a 255-residue protein sequence, read N- to C-terminus: Proteasome subunit alpha type-3 (255 aa).

Serine 2 carries the post-translational modification N-acetylserine. Residues lysine 57, lysine 206, and lysine 230 each carry the N6-acetyllysine modification. A phosphoserine mark is found at serine 243 and serine 250.

Belongs to the peptidase T1A family. As to quaternary structure, the 26S proteasome consists of a 20S proteasome core and two 19S regulatory subunits. The 20S proteasome core is a barrel-shaped complex made of 28 subunits that are arranged in four stacked rings. The two outer rings are each formed by seven alpha subunits, and the two inner rings are formed by seven beta subunits. The proteolytic activity is exerted by three beta-subunits PSMB5, PSMB6 and PSMB7. Interacts with AURKB. Interacts with CDKN1A. Interacts with MDM2 and RB1. Interacts with the C-terminus of TBXA2R isoform 2. Interacts with DNAJB2.

The protein resides in the cytoplasm. It localises to the nucleus. Functionally, component of the 20S core proteasome complex involved in the proteolytic degradation of most intracellular proteins. This complex plays numerous essential roles within the cell by associating with different regulatory particles. Associated with two 19S regulatory particles, forms the 26S proteasome and thus participates in the ATP-dependent degradation of ubiquitinated proteins. The 26S proteasome plays a key role in the maintenance of protein homeostasis by removing misfolded or damaged proteins that could impair cellular functions, and by removing proteins whose functions are no longer required. Associated with the PA200 or PA28, the 20S proteasome mediates ubiquitin-independent protein degradation. This type of proteolysis is required in several pathways including spermatogenesis (20S-PA200 complex) or generation of a subset of MHC class I-presented antigenic peptides (20S-PA28 complex). Binds to the C-terminus of CDKN1A and thereby mediates its degradation. Negatively regulates the membrane trafficking of the cell-surface thromboxane A2 receptor (TBXA2R) isoform 2. The protein is Proteasome subunit alpha type-3 (PSMA3) of Bos taurus (Bovine).